The chain runs to 482 residues: MTKPENIGIHGIEVYFPSTYVAQEDLEKFDGVSQGKYTLGLGQTNMAFCGDREDIYSLSLNAVNNLMDKFNVDPNSIGRLEVGTETVIDKSKSVKTVLMDLFAKHGNTSIDGIDTINACYGGTSALHNALQWMESSYWDGRNAIVVAGDIAVYEKGPARPTGGAGVVAMLIGPNAPITFESGLRGVHMENVYDFYKPDMDSEYPRVDGKLSISCYFRAIDNCYNRYAKAFEKKYGKSFSLDQVDFALFHSPYNKLVQKSFGRMLYNDFLNNPNDSRYASLEAYKNVKPEDTYFDSVLEKALSAITKNDYATKVAPTTLLAKQLGNTYCGSTYSGLLSLLDEKSNDLVGKRVLTFSYGSGLAASAFSFKVEKPINHIVEKVDLKNRLAKRVRVEPEIFTEKLSLRETRHNLKNYVPSDETTNMFPGSFYLSSVDNAGIRKYDRTYSTSAVLGAFQRRQQISQSTIKSLNLFRATKSVLSILKK.

Glutamate 85 (proton donor/acceptor) is an active-site residue. The Acyl-thioester intermediate role is filled by cysteine 119. 7 residues coordinate (3S)-3-hydroxy-3-methylglutaryl-CoA: cysteine 119, threonine 161, serine 211, histidine 249, lysine 258, asparagine 325, and serine 358. Histidine 249 acts as the Proton donor/acceptor in catalysis.

Belongs to the thiolase-like superfamily. HMG-CoA synthase family.

The enzyme catalyses acetoacetyl-CoA + acetyl-CoA + H2O = (3S)-3-hydroxy-3-methylglutaryl-CoA + CoA + H(+). The protein operates within metabolic intermediate biosynthesis; (R)-mevalonate biosynthesis; (R)-mevalonate from acetyl-CoA: step 2/3. Functionally, condenses acetyl-CoA with acetoacetyl-CoA to form HMG-CoA, which is the substrate for HMG-CoA reductase. The protein is Hydroxymethylglutaryl-CoA synthase A (hgsA) of Dictyostelium discoideum (Social amoeba).